A 203-amino-acid chain; its full sequence is Urease accessory protein UreG (203 aa).

14-21 (GPVGSGKT) is a GTP binding site.

This sequence belongs to the SIMIBI class G3E GTPase family. UreG subfamily. Homodimer. UreD, UreF and UreG form a complex that acts as a GTP-hydrolysis-dependent molecular chaperone, activating the urease apoprotein by helping to assemble the nickel containing metallocenter of UreC. The UreE protein probably delivers the nickel.

Its subcellular location is the cytoplasm. Functionally, facilitates the functional incorporation of the urease nickel metallocenter. This process requires GTP hydrolysis, probably effectuated by UreG. In Agrobacterium fabrum (strain C58 / ATCC 33970) (Agrobacterium tumefaciens (strain C58)), this protein is Urease accessory protein UreG.